A 319-amino-acid polypeptide reads, in one-letter code: L-threo-3-hydroxyaspartate ammonia-lyase (319 aa).

Lysine 53 is modified (N6-(pyridoxal phosphate)lysine). Pyridoxal 5'-phosphate-binding positions include asparagine 80, 179–183, and threonine 304; that span reads GGGGM.

The protein belongs to the serine/threonine dehydratase family. As to quaternary structure, may be either a monomer or a homodimer. Pyridoxal 5'-phosphate is required as a cofactor. Requires Mn(2+) as cofactor. The cofactor is Mg(2+). It depends on Ca(2+) as a cofactor.

The enzyme catalyses (3S)-3-hydroxy-L-aspartate = oxaloacetate + NH4(+). Its activity is regulated as follows. Is strongly inhibited by hydroxylamine and EDTA in vitro. Functionally, catalyzes the deamination of L-threo-3-hydroxyaspartate to oxaloacetate and ammonia. Shows a high specificity towards L-threo-3-hydroxyaspartate as other 3-hydroxyaminoacids, i.e. D,L-erythro- and D-threo-3-hydroxyaspartate, D-threonine, L-threonine, D,L-allothreonine, D,L-threo-3-phenylserine, D-serine, and L-serine, are not substrates for this enzyme. Exhibits no detectable serine and aspartate racemase activity. Might play a role in the detoxification of naturally occurring 3-hydroxyaspartate in Pseudomonas sp. T62 cells. In Pseudomonas sp, this protein is L-threo-3-hydroxyaspartate ammonia-lyase.